The chain runs to 560 residues: Nucleoprotein (560 aa).

The binding site for the cap structure m7GTP stretch occupies residues 54-236 (LRKSKRGDTD…ITKDESALNI (183 aa)). Positions 380 and 382 each coordinate Mn(2+). Glutamate 390, cysteine 497, histidine 500, and cysteine 521 together coordinate Zn(2+). Residue aspartate 525 coordinates Mn(2+).

Belongs to the arenaviridae nucleocapsid protein family. As to quaternary structure, homomultimerizes to form the nucleocapsid. Binds to viral genomic RNA. Interacts with glycoprotein G2. Interacts with protein Z; this interaction probably directs the encapsidated genome to budding sites. Interacts with protein L; this interaction does not interfere with Z-L interaction. Interacts with host IKBKE (via Protein kinase domain); the interaction inhibits IKBKE kinase activity.

It localises to the virion. Its subcellular location is the host cytoplasm. Functionally, encapsidates the genome, protecting it from nucleases. The encapsidated genomic RNA is termed the nucleocapsid (NC). Serves as template for viral transcription and replication. The increased presence of protein N in host cell does not seem to trigger the switch from transcription to replication as observed in other negative strain RNA viruses. Through the interaction with host IKBKE, strongly inhibits the phosphorylation and nuclear translocation of host IRF3, a protein involved in interferon activation pathway, leading to the inhibition of interferon-beta and IRF3-dependent promoters activation. Also encodes a functional 3'-5' exoribonuclease that degrades preferentially dsRNA substrates and thereby participates in the suppression of interferon induction. The polypeptide is Nucleoprotein (Homo sapiens (Human)).